We begin with the raw amino-acid sequence, 382 residues long: Nuclear hormone receptor family member nhr-106 (382 aa).

The segment at residues 2 to 78 (QTTCEICEVP…MGMMPEKVKV (77 aa)) is a DNA-binding region (nuclear receptor). NR C4-type zinc fingers lie at residues 5–25 (CEIC…CRGC) and 42–61 (CKYS…CKSC). In terms of domain architecture, NR LBD spans 110–380 (DVSNLITRGL…FSNPEMFIDS (271 aa)).

The protein belongs to the nuclear hormone receptor family.

The protein resides in the nucleus. Functionally, orphan nuclear receptor. The sequence is that of Nuclear hormone receptor family member nhr-106 (nhr-106) from Caenorhabditis elegans.